The sequence spans 265 residues: Apolipoprotein A-I (265 aa).

Residues 1 to 18 form the signal peptide; it reads MKAVVLAVAALFLAGGEA. Repeat copies occupy residues 68–89 and 90–111. The 10 X approximate tandem repeats stretch occupies residues 68–265; sequence LKLTENLDTL…EEASKKLSSQ (198 aa). The residue at position 110 (M110) is a Methionine sulfoxide. One copy of the 3; half-length repeat lies at 112-122; that stretch reads KDLADMKQKVQ. 3 consecutive repeat copies span residues 123-144, 145-166, and 167-188. One copy of the 7; truncated repeat lies at 189–208; that stretch reads PYSEQMRERLAERLAALRDS. The residue at position 194 (M194) is a Methionine sulfoxide. Residues 209–230 form repeat 8; that stretch reads PSLAEYQAKAHEHLKTLHEKAQ. The 9; half-length repeat unit spans residues 231 to 241; sequence PALSDLGQGVL. Copy 10 of the repeat occupies 242 to 265; it reads PVLESLKATLVGAIEEASKKLSSQ.

This sequence belongs to the apolipoprotein A1/A4/E family. In terms of assembly, homodimer. Interacts with APOA1BP and CLU. Component of a sperm activating protein complex (SPAP), consisting of APOA1, an immunoglobulin heavy chain, an immunoglobulin light chain and albumin. Interacts with NDRG1. Interacts with SCGB3A2. Interacts with NAXE and YJEFN3. Glycosylated. In terms of processing, palmitoylated. Post-translationally, phosphorylation sites are present in the extracellular medium.

Its subcellular location is the secreted. In terms of biological role, participates in the reverse transport of cholesterol from tissues to the liver for excretion by promoting cholesterol efflux from tissues and by acting as a cofactor for the lecithin cholesterol acyltransferase (LCAT). As part of the SPAP complex, activates spermatozoa motility. The chain is Apolipoprotein A-I (Apoa1) from Dipodomys ordii (Ord's kangaroo rat).